Here is a 266-residue protein sequence, read N- to C-terminus: uncharacterized protein (266 aa).

Residue Ser176 is modified to Phosphoserine. Thr178 bears the Phosphothreonine mark.

This is an uncharacterized protein from Schizosaccharomyces pombe (strain 972 / ATCC 24843) (Fission yeast).